Here is a 430-residue protein sequence, read N- to C-terminus: Isocitrate dehydrogenase [NADP], mitochondrial (430 aa).

Residues 1-27 constitute a mitochondrion transit peptide; the sequence is MIRASAIQRTAMLLRQLRGFSTSATLA. NADP(+) is bound by residues 101–103 and arginine 108; that span reads TIT. Threonine 103 is a substrate binding site. Substrate-binding positions include 120–126, arginine 135, and arginine 158; that span reads SPNGTIR. A Mn(2+)-binding site is contributed by aspartate 277. Lysine 285 contributes to the NADP(+) binding site. Residue aspartate 300 participates in Mn(2+) binding. Residues 335–340 and asparagine 353 contribute to the NADP(+) site; that span reads GTVTRH.

Belongs to the isocitrate and isopropylmalate dehydrogenases family. In terms of assembly, homodimer. Mg(2+) serves as cofactor. Requires Mn(2+) as cofactor.

Its subcellular location is the mitochondrion. The catalysed reaction is D-threo-isocitrate + NADP(+) = 2-oxoglutarate + CO2 + NADPH. In terms of biological role, mitochondrial IDP1 may regulate flux through the tricarboxylic acid cycle and respiration. Its probably critical function is the production of NADPH. In Candida tropicalis (Yeast), this protein is Isocitrate dehydrogenase [NADP], mitochondrial (IDP1).